The following is a 916-amino-acid chain: MAKNVRFSINMFGVMSPMIPPPRHHPVAPMSYPYQKPSSFEYDQLNRVPLSPHHHQQPPYPKPPLQHPSASPIHHQPPPPQHSPSVGDFLPPLQPQPHQDAAGGSRSIYSAHALSQAATNLHPQHLQHLQHGPFSQQPPPPPMGSSPSPALSSSITTGGGGVTRGGGGGGHIIPVDDDSGCALEEYTWVPPGLRPDQVHLYFSAIPEDKVPYVNSIGERHRVRQLLQQLPPHDNEVRYCHSLTDEERKELKLFSAQRKREALGRGTVKQLATNQICDGCGECISSGDMGVYASRFDPGTCWHPACFVCSVCKELLVDLIYFHREARLYCGRHHAETLKPRCSACDEIILADECTEAEGRAWHIKHFACFECDKQLGGQRYIMRDGKPYCLHCFDAMFAEYCDFCSEPIGVDQGQMSHDGQHWHATDSCFACSTCRCSLLGRPFLPRRGEIYCSIACSKGEPPTPSDGSVPTVLPSRTRLRAPGQRNFDDPSAEYVPNLPKSPEPLQSPISERSTPHSSPAKHSHTEMSTNISSPVPTEFNDQTYSVSADNDVQTYTGSGATSPISSRTLPCTEPSDQTDHQHQSLPPLLPNHRRIPQCSPELDRLLHKDRSRQPLDLTDLSLSLDNWQADHNSTVIPGPSIAKTNPALTSSMPELSQSLQQQQQQQQQPQSLLAYDDISPLDKASAITDPDDAIQNASDDASHSIVELPTPPPIVSNTRDPENLPKMPLRRFQNSLPRNKFHKSSIIKKEVRFEGIFQDSLPRSKSYCTRSGGSRSRSSKSKRRSSHHHQHHRSSGESSSYSGTSYDRHHHSSSGSSSSNRRSPRRRRVPDVEFIEHQDHHRGDGDDDSDSRSVCSTCSSSSSSADDTVYELPMRRTYGGTRIHYMPNNSLACARKRKQLQNSHPYEKDNKNCIIS.

2 disordered regions span residues 49–105 (PLSP…AGGS) and 127–176 (QHLQ…IPVD). Low complexity predominate over residues 145–156 (SSPSPALSSSIT). Residues 157 to 171 (TGGGGVTRGGGGGGH) show a composition bias toward gly residues. Positions 167-275 (GGGGHIIPVD…TVKQLATNQI (109 aa)) constitute a PET domain. LIM zinc-binding domains are found at residues 274–338 (QICD…ETLK), 339–399 (PRCS…MFAE), and 400–462 (YCDF…GEPP). Disordered regions lie at residues 460–593 (EPPT…PNHR), 635–671 (VIPGPSIAKTNPALTSSMPELSQSLQQQQQQQQQPQS), 692–725 (DAIQNASDDASHSIVELPTPPPIVSNTRDPENLP), and 763–870 (RSKS…DTVY). Polar residues-rich tracts occupy residues 507-517 (SPISERSTPHS), 526-569 (EMST…SRTL), and 642-654 (AKTNPALTSSMPE). Residues 655–671 (LSQSLQQQQQQQQQPQS) are compositionally biased toward low complexity. Residues 777 to 793 (RSSKSKRRSSHHHQHHR) show a composition bias toward basic residues. The span at 796 to 805 (GESSSYSGTS) shows a compositional bias: low complexity. Basic and acidic residues predominate over residues 829-844 (VPDVEFIEHQDHHRGD). Residues 852–867 (RSVCSTCSSSSSSADD) are compositionally biased toward low complexity.

This sequence belongs to the prickle / espinas / testin family. In terms of assembly, interacts with dsh; PET and LIM domains interact with dsh DEP domain, in wing cells. Interacts with Vang in photoreceptor cells.

The protein resides in the cell membrane. In terms of biological role, acts in a planar cell polarity (PCP) complex; polarization along the apical/basal axis of epithelial cells. PCP signaling in the wing disk requires the receptor fz and the cytoplasmic proteins dsh and pk. These act in a feedback loop leading to activation of the jnk cascade and subsequent polarized arrangement of hairs and bristles. Dgo and pk compete with one another for dsh binding, thereby modulating fz dsh activity and ensuring tight control over fz PCP signaling. Vang, stan and pk function together to regulate the establishment of tissue polarity in the adult eye. The polypeptide is Protein prickle (Aedes aegypti (Yellowfever mosquito)).